Reading from the N-terminus, the 200-residue chain is MIFHQFYSILILCLIFPNQVVQSDKERQDWIPSDYGGYMNPAGRSDEERQDWIPSDYGGHMNPAGRSDEERQDWIPSDYGGHMNPAGRSNEERQDWIPSDYGGYMNPAGRSDEERQDWIPSDYGGHMNPAGRSNEERQDWIPSDYGGYMNPAGRSDEERQDWIPSDYGGHMNPAGRSDEERQDWIPSDYGGYMNPAGRSD.

The N-terminal stretch at M1 to S23 is a signal peptide. The propeptide occupies D24–D34. The disordered stretch occupies residues W30–D200. Residue A42 is modified to Alanine amide. A propeptide spanning residues S45–D100 is cleaved from the precursor. A108 is subject to Alanine amide. Positions S111–D144 are excised as a propeptide. A152 is modified (alanine amide). The propeptide occupies S155–D188. Alanine amide is present on A196. Residues S199–D200 constitute a propeptide that is removed on maturation.

Venom gland.

The protein localises to the secreted. Synthetic BmK-YA activates human opioid receptors in vitro, with highest activity on the delta-type/OPRD1 receptor (EC(50)=2.5 uM) and lower activity on mu-type/OPRM1 and kappa-type/OPRK1 receptors (EC(50)=17 uM and 30 uM, respectively). This Olivierus martensii (Manchurian scorpion) protein is BmK-YA precursor.